Here is a 503-residue protein sequence, read N- to C-terminus: Transcriptional regulator LovE (503 aa).

The zn(2)-C6 fungal-type DNA-binding region spans 35-67 (CDRCHAQKIKCTGNKEVTGRAPCQRCQQAGLRC). Disordered regions lie at residues 89-124 (ADPD…RQFL) and 331-358 (SHMS…HSSV). Residues 339–357 (SRSQSPSRDDTSSSSGHSS) are compositionally biased toward low complexity.

Its subcellular location is the nucleus. In terms of biological role, transcription factor that regulates the expression of the he gene cluster that mediates the biosynthesis of lovastatin (also known as mevinolin, mevacor or monacolin K), a hypolipidemic inhibitor of (3S)-hydroxymethylglutaryl-coenzyme A (HMG-CoA) reductase (HMGR). This chain is Transcriptional regulator LovE, found in Aspergillus terreus.